A 713-amino-acid chain; its full sequence is Fibroblast growth factor receptor 4 (713 aa).

The N-terminal stretch at Met1–Ser20 is a signal peptide. Residues His21 to Tyr54 are disordered. Residues His21–Asp281 lie on the Extracellular side of the membrane. Positions Asp42–Tyr54 are enriched in basic and acidic residues. Ig-like C2-type domains lie at Pro59–Asp152 and Pro161–Thr261. Cys84 and Cys136 are oxidised to a cystine. N-linked (GlcNAc...) asparagine glycans are attached at residues Asn133, Asn170, Asn202, Asn223, and Asn234. Cys183 and Cys245 are disulfide-bonded. Residues Ile282–Cys302 traverse the membrane as a helical segment. Residues Arg303–Thr713 are Cytoplasmic-facing. The Protein kinase domain occupies Leu379–Leu667. ATP contacts are provided by residues Leu385–Val393 and Lys415. The Proton acceptor role is filled by Asp524. Phosphotyrosine; by autocatalysis is present on residues Tyr554, Tyr555, and Tyr666.

The protein belongs to the protein kinase superfamily. Tyr protein kinase family. Fibroblast growth factor receptor subfamily. In terms of assembly, monomer. Homodimer after ligand binding. Interacts with FGF1, FGF2, FGF4, FGF6, FGF8, FGF9, FGF16, FGF17, FGF18, FGF19, FGF21 and FGF23 (in vitro). Binding affinity for FGF family members is enhanced by interactions between FGFs and heparan sulfate proteoglycans. Interacts with KLB; this strongly increases the affinity for FGF19 and FGF23. Affinity for FGF19 is strongly increased by KLB and sulfated glycosaminoglycans. KLB and KL both interact with the core-glycosylated FGFR4 in the endoplasmic reticulum and promote its degradation, so that only FGFR4 with fully mature N-glycans is expressed at the cell surface. Identified in a complex with NCAM1, CDH2, PLCG1, FRS2, SRC, SHC1, GAP43 and CTTN. Interacts with MMP14 and HIP1. Interacts with STAT3. Post-translationally, N-glycosylated. Full maturation of the glycan chains in the Golgi is essential for high affinity interaction with FGF19. In terms of processing, ubiquitinated. Subject to proteasomal degradation when not fully glycosylated. Autophosphorylated. Binding of FGF family members together with heparan sulfate proteoglycan or heparin promotes receptor dimerization and autophosphorylation on tyrosine residues. Autophosphorylation occurs in trans between the two FGFR molecules present in the dimer.

It is found in the cell membrane. Its subcellular location is the endosome. The protein localises to the endoplasmic reticulum. The enzyme catalyses L-tyrosyl-[protein] + ATP = O-phospho-L-tyrosyl-[protein] + ADP + H(+). With respect to regulation, present in an inactive conformation in the absence of bound ligand. Ligand binding leads to dimerization and activation by autophosphorylation on tyrosine residues. In terms of biological role, tyrosine-protein kinase that acts as a cell-surface receptor for fibroblast growth factors and plays a role in the regulation of cell proliferation, differentiation and migration, and in regulation of lipid metabolism, bile acid biosynthesis, glucose uptake, vitamin D metabolism and phosphate homeostasis. Required for normal down-regulation of the expression of CYP7A1, the rate-limiting enzyme in bile acid synthesis, in response to FGF19. Phosphorylates PLCG1 and FRS2. Ligand binding leads to the activation of several signaling cascades. Activation of PLCG1 leads to the production of the cellular signaling molecules diacylglycerol and inositol 1,4,5-trisphosphate. Phosphorylation of FRS2 triggers recruitment of GRB2, GAB1, PIK3R1 and SOS1, and mediates activation of RAS, MAPK1/ERK2, MAPK3/ERK1 and the MAP kinase signaling pathway, as well as of the AKT1 signaling pathway. Promotes SRC-dependent phosphorylation of the matrix protease MMP14 and its lysosomal degradation. FGFR4 signaling is down-regulated by receptor internalization and degradation; MMP14 promotes internalization and degradation of FGFR4. The sequence is that of Fibroblast growth factor receptor 4 (FGFR4) from Coturnix coturnix (Common quail).